Consider the following 180-residue polypeptide: Putative 5'(3')-deoxyribonucleotidase (180 aa).

Asp-9 serves as the catalytic Nucleophile. The Mg(2+) site is built by Asp-9, Asp-11, and Asp-135. Asp-11 functions as the Proton donor in the catalytic mechanism.

It belongs to the 5'(3')-deoxyribonucleotidase family. Mg(2+) serves as cofactor.

In terms of biological role, dephosphorylates the 5' and 2'(3')-phosphates of deoxyribonucleotides. The polypeptide is Putative 5'(3')-deoxyribonucleotidase (Staphylococcus aureus (strain MSSA476)).